Consider the following 346-residue polypeptide: Flap endonuclease 1 (346 aa).

Residues 1–100 are N-domain; it reads MGVDIKELVE…KELERRYQIK (100 aa). Residues aspartate 29, aspartate 82, glutamate 154, glutamate 156, aspartate 175, aspartate 177, and aspartate 238 each contribute to the Mg(2+) site. The tract at residues 118 to 260 is I-domain; it reads EARIYAQQTS…KALKLVKELK (143 aa). The segment at 336–344 is interaction with PCNA; sequence KQQSLESWF.

Belongs to the XPG/RAD2 endonuclease family. FEN1 subfamily. In terms of assembly, interacts with PCNA. PCNA stimulates the nuclease activity without altering cleavage specificity. Mg(2+) is required as a cofactor.

Functionally, structure-specific nuclease with 5'-flap endonuclease and 5'-3' exonuclease activities involved in DNA replication and repair. During DNA replication, cleaves the 5'-overhanging flap structure that is generated by displacement synthesis when DNA polymerase encounters the 5'-end of a downstream Okazaki fragment. Binds the unpaired 3'-DNA end and kinks the DNA to facilitate 5' cleavage specificity. Cleaves one nucleotide into the double-stranded DNA from the junction in flap DNA, leaving a nick for ligation. Also involved in the base excision repair (BER) pathway. Acts as a genome stabilization factor that prevents flaps from equilibrating into structures that lead to duplications and deletions. Also possesses 5'-3' exonuclease activity on nicked or gapped double-stranded DNA. The sequence is that of Flap endonuclease 1 from Thermofilum pendens (strain DSM 2475 / Hrk 5).